A 136-amino-acid polypeptide reads, in one-letter code: Small ribosomal subunit protein uS11 (136 aa).

The protein belongs to the universal ribosomal protein uS11 family. Part of the 30S ribosomal subunit. Interacts with proteins S7 and S18. Binds to IF-3.

In terms of biological role, located on the platform of the 30S subunit, it bridges several disparate RNA helices of the 16S rRNA. Forms part of the Shine-Dalgarno cleft in the 70S ribosome. This chain is Small ribosomal subunit protein uS11, found in Leptospira borgpetersenii serovar Hardjo-bovis (strain JB197).